A 1056-amino-acid chain; its full sequence is Sucrose-phosphate synthase (1056 aa).

The segment covering histidine 112–threonine 123 has biased composition (basic and acidic residues). The interval histidine 112 to glutamate 132 is disordered. Phosphoserine is present on residues serine 158 and serine 424. Residues asparagine 681–serine 700 are disordered.

The protein belongs to the glycosyltransferase 1 family. As to quaternary structure, homodimer or homotetramer. Post-translationally, phosphorylated at Ser-158 and Ser-424.

The catalysed reaction is beta-D-fructose 6-phosphate + UDP-alpha-D-glucose = sucrose 6(F)-phosphate + UDP + H(+). It participates in glycan biosynthesis; sucrose biosynthesis; sucrose from D-fructose 6-phosphate and UDP-alpha-D-glucose: step 1/2. Its activity is regulated as follows. Activity is regulated by phosphorylation and moderated by concentration of metabolites and light. In terms of biological role, plays a role in photosynthetic sucrose synthesis by catalyzing the rate-limiting step of sucrose biosynthesis from UDP-glucose and fructose- 6-phosphate. Involved in the regulation of carbon partitioning in the leaves of plants. May regulate the synthesis of sucrose and therefore play a major role as a limiting factor in the export of photoassimilates out of the leaf. Plays a role for sucrose availability that is essential for plant growth and fiber elongation. This chain is Sucrose-phosphate synthase (SPS1), found in Spinacia oleracea (Spinach).